The following is a 239-amino-acid chain: MAMLRTDLEFSMLPQLGTRPVRWRFADGLVPYEEAVETMEREVALIADGGDELVWLVEHPPLYTAGTSANARDLVQPNRFPVFATGRGGEYTYHGPGQRVAYVMLDLKRRRQDVRAFVAALEDVVIRTLDMMNVRGERREDRVGVWVRRPEKPLLADGTMAEDKIAALGIRLRKWVTFHGLSLNVDPDLDHFGGIVPCGISAYGVTSLVDLGLPVMMADVDIRLRTAFEAVFGETTGEI.

A BPL/LPL catalytic domain is found at 48 to 236 (DGGDELVWLV…AFEAVFGETT (189 aa)). Residues 87 to 94 (RGGEYTYH), 167 to 169 (ALG), and 180 to 182 (GLS) contribute to the substrate site. Cys198 (acyl-thioester intermediate) is an active-site residue.

This sequence belongs to the LipB family.

It localises to the cytoplasm. It carries out the reaction octanoyl-[ACP] + L-lysyl-[protein] = N(6)-octanoyl-L-lysyl-[protein] + holo-[ACP] + H(+). It participates in protein modification; protein lipoylation via endogenous pathway; protein N(6)-(lipoyl)lysine from octanoyl-[acyl-carrier-protein]: step 1/2. Functionally, catalyzes the transfer of endogenously produced octanoic acid from octanoyl-acyl-carrier-protein onto the lipoyl domains of lipoate-dependent enzymes. Lipoyl-ACP can also act as a substrate although octanoyl-ACP is likely to be the physiological substrate. This chain is Octanoyltransferase, found in Rhizobium johnstonii (strain DSM 114642 / LMG 32736 / 3841) (Rhizobium leguminosarum bv. viciae).